The chain runs to 337 residues: Ral GTPase-activating protein subunit alpha-1 (337 aa).

In terms of assembly, component of the heterodimeric RalGAP1 complex with RALGAPB. Heterodimerization is required for activity. Interacts with the HLH region of TCF3/isoform E12.

It localises to the cytoplasm. The protein localises to the nucleus. Catalytic subunit of the heterodimeric RalGAP1 complex which acts as a GTPase activator for the Ras-like small GTPases RALA and RALB. This chain is Ral GTPase-activating protein subunit alpha-1, found in Sus scrofa (Pig).